The sequence spans 162 residues: Phosphopantetheine adenylyltransferase (162 aa).

Residue T9 participates in substrate binding. ATP is bound by residues 9-10 (TF) and H17. Substrate-binding residues include K41, L76, and R90. Residues 91–93 (GLR), E101, and 126–132 (HQAIASR) contribute to the ATP site.

It belongs to the bacterial CoaD family. Homohexamer. Requires Mg(2+) as cofactor.

Its subcellular location is the cytoplasm. It carries out the reaction (R)-4'-phosphopantetheine + ATP + H(+) = 3'-dephospho-CoA + diphosphate. The protein operates within cofactor biosynthesis; coenzyme A biosynthesis; CoA from (R)-pantothenate: step 4/5. Functionally, reversibly transfers an adenylyl group from ATP to 4'-phosphopantetheine, yielding dephospho-CoA (dPCoA) and pyrophosphate. This Caulobacter sp. (strain K31) protein is Phosphopantetheine adenylyltransferase.